Reading from the N-terminus, the 466-residue chain is 55 kDa erythrocyte membrane protein (466 aa).

Thr2 is modified (N-acetylthreonine). At Ser19 the chain carries Phosphoserine. Thr49 is subject to Phosphothreonine. Residues Ser57 and Ser110 each carry the phosphoserine modification. One can recognise a PDZ domain in the interval 71 to 152 (LIQFEKVTEE…MISLKVIPNQ (82 aa)). An SH3 domain is found at 158–228 (ALQMFMRAQF…PSPELQEWRV (71 aa)). Ser243 carries the phosphoserine modification. An interaction with PALS1 region spans residues 268 to 466 (VVSYEEVVRL…PQWVPVSWVY (199 aa)). The Guanylate kinase-like domain occupies 282-451 (RKTLVLIGAS…TLKTLQETFD (170 aa)).

Belongs to the MAGUK family. In terms of assembly, heterodimer with PALS1. Interacts with DLG5 and NF2. Interacts (via guanylate kinase-like domain) with WHRN (via third PDZ domain). Interacts with PALS1. Palmitoylated.

The protein resides in the cell membrane. The protein localises to the cell projection. Its subcellular location is the stereocilium. Essential regulator of neutrophil polarity. Regulates neutrophil polarization by regulating AKT1 phosphorylation through a mechanism that is independent of PIK3CG activity. The chain is 55 kDa erythrocyte membrane protein (MPP1) from Bos taurus (Bovine).